Reading from the N-terminus, the 567-residue chain is Inactive protein kinase SELMODRAFT_444075 (567 aa).

Positions 148–206 are disordered; the sequence is NETRRKGPSPSEVLNSTTSSPASHKPQVLNDFLRMKESREYTEETDTQRNVSRPVDRVS. Residues 159-169 show a composition bias toward polar residues; sequence EVLNSTTSSPA. Positions 180–189 are enriched in basic and acidic residues; the sequence is LRMKESREYT. Over residues 196–206 the composition is skewed to low complexity; the sequence is RNVSRPVDRVS. Residues 255–487 enclose the Protein kinase domain; the sequence is FSDVNFLAEG…EGDSLSDTSL (233 aa). Residues 261–269 and K283 each bind ATP; that span reads LAEGGYGSV. The span at 511 to 538 shows a compositional bias: low complexity; it reads DSSSSRSSSASSVLKSFSRTQHSSRSSS. Residues 511–567 form a disordered region; that stretch reads DSSSSRSSSASSVLKSFSRTQHSSRSSSNAGSPLNPAATQALAFKKYNKNTTRHTQD. Residues 556–567 are compositionally biased toward basic residues; it reads KYNKNTTRHTQD.

The protein is Inactive protein kinase SELMODRAFT_444075 of Selaginella moellendorffii (Spikemoss).